The sequence spans 154 residues: Stigma-specific STIG1-like protein 3 (154 aa).

The N-terminal stretch at 1–23 (MGHRNTVLTILLTISIAIMVLIA) is a signal peptide.

Belongs to the STIG1 family.

This Arabidopsis thaliana (Mouse-ear cress) protein is Stigma-specific STIG1-like protein 3.